The sequence spans 515 residues: G-protein coupled receptor 176 (515 aa).

The Extracellular portion of the chain corresponds to 1 to 41 (MGHNSSWVSPNTSHPRNTSGAEAGANLSAFGELSEAQLYRQ). N-linked (GlcNAc...) asparagine glycans are attached at residues Asn4, Asn11, Asn17, and Asn26. Residues 42-64 (FTTTVQVVIFIGSLLGNFMVLWS) traverse the membrane as a helical segment. Residues 65–77 (TCRTTVFKSVTNR) lie on the Cytoplasmic side of the membrane. The chain crosses the membrane as a helical span at residues 78 to 98 (FIKNLACSGICASVVCVPFDI). Residues 99–108 (ILSSSPHCCW) are Extracellular-facing. A helical transmembrane segment spans residues 109-129 (WIYTMLFCKVLKFLHKVFCSV). Over 130 to 157 (TVLSFPAIALDRYYSVLYPLERKISDAK) the chain is Cytoplasmic. The helical transmembrane segment at 158–177 (SRELVMYIWAHAVVASVPVF) threads the bilayer. Over 178–204 (AVTNVADIYAMSTCTEVWSNSLGHLVY) the chain is Extracellular. The chain crosses the membrane as a helical span at residues 205 to 225 (VLIYNVTTVIVPVAVVFLFLI). Topologically, residues 226–264 (LIRRALSASQKKKVIIAALRTPQNTISIPYASQREAELH) are cytoplasmic. A helical membrane pass occupies residues 265 to 285 (ATLLSMVTVFILCSVPYATLV). At 286-301 (VYQTVLNVPNTSVFLL) the chain is on the extracellular side. The chain crosses the membrane as a helical span at residues 302–322 (LTAIWLPKVSLLANPVLFLTV). Residues 323–515 (NKSVRKCLVG…KVSIFPKVDS (193 aa)) are Cytoplasmic-facing. Residues 407 to 435 (SCPEGEQEPPQLAPSVPPPGTVDSEPRVS) form a disordered region. Positions 417–426 (QLAPSVPPPG) are enriched in pro residues.

It belongs to the G-protein coupled receptor 1 family. In terms of tissue distribution, expressed mainly in the brain, with prominent expression in the SCN (at protein level).

Its subcellular location is the cell membrane. Its function is as follows. Orphan receptor involved in normal circadian rhythm behavior. Acts through the G-protein subclass G(z)-alpha and has an agonist-independent basal activity to repress cAMP production. The chain is G-protein coupled receptor 176 (Gpr176) from Mus musculus (Mouse).